We begin with the raw amino-acid sequence, 719 residues long: DNA ligase (719 aa).

NAD(+)-binding positions include aspartate 42 to aspartate 46, serine 92 to leucine 93, and glutamate 126. The active-site N6-AMP-lysine intermediate is the lysine 128. Positions 149, 185, 301, and 325 each coordinate NAD(+). Cysteine 430, cysteine 433, cysteine 448, and cysteine 454 together coordinate Zn(2+). Residues alanine 640–aspartate 719 enclose the BRCT domain.

The protein belongs to the NAD-dependent DNA ligase family. LigA subfamily. The cofactor is Mg(2+). Requires Mn(2+) as cofactor.

The enzyme catalyses NAD(+) + (deoxyribonucleotide)n-3'-hydroxyl + 5'-phospho-(deoxyribonucleotide)m = (deoxyribonucleotide)n+m + AMP + beta-nicotinamide D-nucleotide.. Its function is as follows. DNA ligase that catalyzes the formation of phosphodiester linkages between 5'-phosphoryl and 3'-hydroxyl groups in double-stranded DNA using NAD as a coenzyme and as the energy source for the reaction. It is essential for DNA replication and repair of damaged DNA. This is DNA ligase from Brucella melitensis biotype 1 (strain ATCC 23456 / CCUG 17765 / NCTC 10094 / 16M).